Consider the following 233-residue polypeptide: uncharacterized protein (233 aa).

Belongs to the LutC/YkgG family.

This is an uncharacterized protein from Neisseria meningitidis serogroup B (strain ATCC BAA-335 / MC58).